The following is a 100-amino-acid chain: Replication restart protein PriB (100 aa).

In terms of domain architecture, SSB spans 1–100 (MTNRMELSGT…VLHADNITQI (100 aa)).

The protein belongs to the PriB family. In terms of assembly, homodimer. Interacts with PriA and DnaT. Component of the replication restart primosome. Primosome assembly occurs via a 'hand-off' mechanism. PriA binds to replication forks, subsequently PriB then DnaT bind; DnaT then displaces ssDNA to generate the helicase loading substrate.

Its function is as follows. Involved in the restart of stalled replication forks, which reloads the replicative helicase on sites other than the origin of replication; the PriA-PriB pathway is the major replication restart pathway. During primosome assembly it facilitates complex formation between PriA and DnaT on DNA; stabilizes PriA on DNA. Stimulates the DNA unwinding activity of PriA helicase. The polypeptide is Replication restart protein PriB (Vibrio parahaemolyticus serotype O3:K6 (strain RIMD 2210633)).